A 382-amino-acid polypeptide reads, in one-letter code: Mannitol-1-phosphate 5-dehydrogenase (382 aa).

4 to 15 (AVHFGAGNIGRG) lines the NAD(+) pocket.

The protein belongs to the mannitol dehydrogenase family.

The catalysed reaction is D-mannitol 1-phosphate + NAD(+) = beta-D-fructose 6-phosphate + NADH + H(+). The protein is Mannitol-1-phosphate 5-dehydrogenase of Vibrio vulnificus (strain YJ016).